The following is a 211-amino-acid chain: UPF0637 protein Bsph_1379 (211 aa).

Belongs to the UPF0637 family.

The protein is UPF0637 protein Bsph_1379 of Lysinibacillus sphaericus (strain C3-41).